Reading from the N-terminus, the 332-residue chain is Ferredoxin--NADP reductase (332 aa).

Positions 33, 41, 46, 86, 120, 286, and 327 each coordinate FAD.

This sequence belongs to the ferredoxin--NADP reductase type 2 family. As to quaternary structure, homodimer. Requires FAD as cofactor.

The catalysed reaction is 2 reduced [2Fe-2S]-[ferredoxin] + NADP(+) + H(+) = 2 oxidized [2Fe-2S]-[ferredoxin] + NADPH. The chain is Ferredoxin--NADP reductase from Rickettsia bellii (strain OSU 85-389).